The primary structure comprises 1129 residues: Translation initiation factor IF-2 (1129 aa).

2 stretches are compositionally biased toward low complexity: residues 33–42 (AARSHSSSIS) and 56–99 (GGSP…AAKP). 2 disordered regions span residues 33–462 (AARS…IGEN) and 485–515 (SLARPSKPRTKHKPAPKPVAAIRKRRKETAR). Residues 100-112 (SPKPSAPSRPEAP) show a composition bias toward pro residues. The span at 135-147 (STPAAAAPAAAPS) shows a compositional bias: low complexity. Residues 148–161 (APAPSAPTPRPKPT) show a composition bias toward pro residues. Positions 162 to 175 (APKASAPAPTASAP) are enriched in low complexity. 2 stretches are compositionally biased toward pro residues: residues 176 to 191 (SAPPRPTSARPTPAPA) and 211 to 221 (PTAPPTRPQPK). Residues 257 to 273 (GQRPGVSPRPSGPPGQR) show a composition bias toward low complexity. Residues 431-445 (GRPDWDDSAKLEALR) show a composition bias toward basic and acidic residues. Composition is skewed to basic residues over residues 490–499 (SKPRTKHKPA) and 506–515 (IRKRRKETAR). In terms of domain architecture, tr-type G spans 621–793 (RRPPVVTVMG…ILLVTEVEDL (173 aa)). The G1 stretch occupies residues 630–637 (GHVDHGKT). A GTP-binding site is contributed by 630–637 (GHVDHGKT). The interval 655–659 (GITQH) is G2. The segment at 680 to 683 (DTPG) is G3. GTP-binding positions include 680 to 684 (DTPGH) and 734 to 737 (NKID). The G4 stretch occupies residues 734 to 737 (NKID). Positions 770–772 (SAL) are G5.

Belongs to the TRAFAC class translation factor GTPase superfamily. Classic translation factor GTPase family. IF-2 subfamily.

It is found in the cytoplasm. In terms of biological role, one of the essential components for the initiation of protein synthesis. Protects formylmethionyl-tRNA from spontaneous hydrolysis and promotes its binding to the 30S ribosomal subunits. Also involved in the hydrolysis of GTP during the formation of the 70S ribosomal complex. This Synechococcus sp. (strain CC9311) protein is Translation initiation factor IF-2.